Here is a 78-residue protein sequence, read N- to C-terminus: Apolipoprotein C-I (78 aa).

An N-terminal signal peptide occupies residues 1 to 26; it reads MRLILWLPVLVVVLLMVTEGPAPAQG.

Belongs to the apolipoprotein C1 family.

The protein localises to the secreted. Its function is as follows. Inhibitor of lipoprotein binding to the low density lipoprotein (LDL) receptor, LDL receptor-related protein, and very low density lipoprotein (VLDL) receptor. Associates with high density lipoproteins (HDL) and the triacylglycerol-rich lipoproteins in the plasma and makes up about 10% of the protein of the VLDL and 2% of that of HDL. Appears to interfere directly with fatty acid uptake and is also the major plasma inhibitor of cholesteryl ester transfer protein (CETP). Binds free fatty acids and reduces their intracellular esterification. Modulates the interaction of APOE with beta-migrating VLDL and inhibits binding of beta-VLDL to the LDL receptor-related protein. The sequence is that of Apolipoprotein C-I (APOC1) from Panthera tigris altaica (Siberian tiger).